Consider the following 503-residue polypeptide: Aspartyl/glutamyl-tRNA(Asn/Gln) amidotransferase subunit B (503 aa).

Belongs to the GatB/GatE family. GatB subfamily. As to quaternary structure, heterotrimer of A, B and C subunits.

The catalysed reaction is L-glutamyl-tRNA(Gln) + L-glutamine + ATP + H2O = L-glutaminyl-tRNA(Gln) + L-glutamate + ADP + phosphate + H(+). It catalyses the reaction L-aspartyl-tRNA(Asn) + L-glutamine + ATP + H2O = L-asparaginyl-tRNA(Asn) + L-glutamate + ADP + phosphate + 2 H(+). Allows the formation of correctly charged Asn-tRNA(Asn) or Gln-tRNA(Gln) through the transamidation of misacylated Asp-tRNA(Asn) or Glu-tRNA(Gln) in organisms which lack either or both of asparaginyl-tRNA or glutaminyl-tRNA synthetases. The reaction takes place in the presence of glutamine and ATP through an activated phospho-Asp-tRNA(Asn) or phospho-Glu-tRNA(Gln). This Rhodococcus jostii (strain RHA1) protein is Aspartyl/glutamyl-tRNA(Asn/Gln) amidotransferase subunit B.